A 333-amino-acid chain; its full sequence is N-acetyl-gamma-glutamyl-phosphate reductase (333 aa).

The active site involves Cys145.

This sequence belongs to the NAGSA dehydrogenase family. Type 1 subfamily.

The protein resides in the cytoplasm. It carries out the reaction N-acetyl-L-glutamate 5-semialdehyde + phosphate + NADP(+) = N-acetyl-L-glutamyl 5-phosphate + NADPH + H(+). Its pathway is amino-acid biosynthesis; L-arginine biosynthesis; N(2)-acetyl-L-ornithine from L-glutamate: step 3/4. Catalyzes the NADPH-dependent reduction of N-acetyl-5-glutamyl phosphate to yield N-acetyl-L-glutamate 5-semialdehyde. This is N-acetyl-gamma-glutamyl-phosphate reductase from Salinispora tropica (strain ATCC BAA-916 / DSM 44818 / JCM 13857 / NBRC 105044 / CNB-440).